The chain runs to 68 residues: Intracellular calcium channel modulator CCP-Ts (68 aa).

Positions 1 to 23 (MNPKLLIVIGLLLATGVCSFAKA) are cleaved as a signal peptide. Cystine bridges form between cysteine 33–cysteine 47, cysteine 40–cysteine 53, and cysteine 46–cysteine 62.

It belongs to the scorpion calcin-like family. As to expression, expressed by the venom gland. In intravenously injected mice, the labeled toxin has preference for heart, liver and lungs.

The protein localises to the secreted. It is found in the nucleus. Functionally, cell penetrating peptide (CPP) that increases intracellular calcium release through the activation of nuclear inositol 1,4,5-trisphosphate receptors (ITPR) of cardiomyocytes, thereby causing an increase in the contraction frequency of these cells. In vivo, this toxin is not lethal to mice, hovewer anti-CPP serum reduces venom lethality, suggesting that this toxin is lethal when it acts in synergy with other venom components. The protein is Intracellular calcium channel modulator CCP-Ts of Tityus serrulatus (Brazilian scorpion).